The following is a 685-amino-acid chain: Stromal interaction molecule 1 (685 aa).

A signal peptide spans 1-22; it reads MDVCARLALWLLWGLLLHQGQS. The Extracellular segment spans residues 23–213; the sequence is LSHSHSEKNT…LLTRHNHLKD (191 aa). Residues 24 to 43 are disordered; that stretch reads SHSHSEKNTGASSGATSEES. Low complexity predominate over residues 32-41; it reads TGASSGATSE. EF-hand domains are found at residues 64-97 and 102-126; these read SFEAVRNIHKLMDDDANGDVDVEESDEFLREDLN and TVKHSTFHGEDKLISVEDLWKAWKA. Residues Asp76, Asp78, Asn80, Asp82, and Glu87 each contribute to the Ca(2+) site. 2 N-linked (GlcNAc...) asparagine glycosylation sites follow: Asn131 and Asn171. The SAM domain occupies 132 to 200; it reads WTVDEVIQWL…QLKALDTVLF (69 aa). A helical membrane pass occupies residues 214–234; the sequence is FMLVVSIVIGVGGCWFAYIQN. At 235 to 685 the chain is on the cytoplasmic side; that stretch reads RYSKEHMKKM…LKIFKKPLKK (451 aa). Residues 248–442 adopt a coiled-coil conformation; it reads LEGLHRAEQS…IEILCGFQIV (195 aa). Residue Ser257 is modified to Phosphoserine. An SOAR/CAD region spans residues 344 to 442; that stretch reads PEALQKWLQL…IEILCGFQIV (99 aa). The contributes to fast Ca(2+)-dependent inactivation of CRAC channels stretch occupies residues 475 to 483; it reads DDVDDMDEE. Low complexity predominate over residues 490 to 499; sequence MQSPSLQSSV. The interval 490–542 is disordered; sequence MQSPSLQSSVRQRLTEPQHGLGSQRDLTHSDSESSLHTSDRQRVAPKPPQMGR. Phosphothreonine is present on Thr504. Ser512 carries the post-translational modification Phosphoserine. A compositionally biased stretch (basic and acidic residues) spans 515–532; the sequence is DLTHSDSESSLHTSDRQR. Thr517 is modified (phosphothreonine). Phosphoserine occurs at positions 519, 521, 523, 524, 567, 575, 602, 608, 618, 621, and 628. Positions 596 to 685 are disordered; that stretch reads LMELNPSVPP…LKIFKKPLKK (90 aa). Residues 608–620 are compositionally biased toward low complexity; the sequence is SPLLDSSHSHSPS. A Microtubule tip localization signal motif is present at residues 642–645; the sequence is TRIP. The span at 655-666 shows a compositional bias: acidic residues; it reads EEDNGSIGEETD. Ser660 is subject to Phosphoserine. Position 665 is a phosphothreonine (Thr665). Ser668 carries the post-translational modification Phosphoserine. A compositionally biased stretch (basic residues) spans 670–685; it reads GRKKFPLKIFKKPLKK. The required for generation of inwardly rectifying CRAC currents stretch occupies residues 672–685; that stretch reads KKFPLKIFKKPLKK.

As to quaternary structure, monomer in the presence of Ca(2+). It oligomerizes in absence of Ca(2+). Forms homooligomers and heterooligomers with STIM2. Interacts with pore-forming subunits of CRAC channels, ORAI1, ORAI2 and ORAI3; this interaction is potentiated upon Ca(2+) store depletion. Interacts (via the transmembrane region and the SOAR/CAD domain) with SPPL3; the interaction promotes the binding of STIM1 to ORAI1. Interacts with ORAI1. Interacts with MAPRE1; probably required for targeting to the growing microtubule plus ends. Interacts with CRACR2A/EFCAB4B; the interaction is direct and takes place in absence of Ca(2+). Forms a complex with CRACR2A/EFCAB4B and ORAI1 at low concentration of Ca(2+), the complex dissociates at elevated Ca(2+) concentrations. Interacts with SARAF, promoting a slow inactivation of STIM1-dependent SOCE activity, possibly by facilitating the deoligomerization of STIM1. Interacts with EFHB; the interaction takes place upon Ca(2+)-store depletion and inhibits the association with SARAF. Interacts with ASPH. Interacts with SLC35G1; intracellular Ca(2+)-dependent. May interact with ATP1A1, ATP2A2, ATP2B1, ATP2B4, KPNB1 and XPO1; through SLC35G1. Interacts with TMEM203. Interacts with STIMATE, promoting STIM1 conformational switch. Interacts with TMEM178A. Interacts with CASQ1 (via C-terminal end and preferentially with the monomeric form); this interaction increases in response to a depletion of intracellular Ca(2+), decreases both STIM1 aggregation and clustering, interaction of STIM1 with ORAI1 and store-operated Ca(2+) entry (SOCE) activity. Interacts with ADCY8. Post-translationally, glycosylation is required for cell surface expression. In terms of processing, phosphorylated predominantly on Ser residues.

It localises to the cell membrane. It is found in the endoplasmic reticulum membrane. The protein localises to the sarcoplasmic reticulum. The protein resides in the cytoplasm. Its subcellular location is the cytoskeleton. Acts as a Ca(2+) sensor that gates two major inward rectifying Ca(2+) channels at the plasma membrane: Ca(2+) release-activated Ca(2+) (CRAC) channels and arachidonate-regulated Ca(2+)-selective (ARC) channels. Plays a role in mediating store-operated Ca(2+) entry (SOCE), a Ca(2+) influx following depletion of intracellular Ca(2+) stores. Upon Ca(2+) depletion, translocates from the endoplasmic reticulum to the plasma membrane where it activates CRAC channel pore-forming subunits ORA1, ORA2 and ORAI3 to generate sustained and oscillatory Ca(2+) entry. Involved in enamel formation. This chain is Stromal interaction molecule 1, found in Rattus norvegicus (Rat).